Here is a 484-residue protein sequence, read N- to C-terminus: Glutamate--tRNA ligase (484 aa).

Residues 11 to 21 (PSPTGYLHIGN) carry the 'HIGH' region motif. The 'KMSKS' region signature appears at 252–256 (KLSKR). Lys-255 is an ATP binding site.

The protein belongs to the class-I aminoacyl-tRNA synthetase family. Glutamate--tRNA ligase type 1 subfamily. In terms of assembly, monomer.

The protein localises to the cytoplasm. It carries out the reaction tRNA(Glu) + L-glutamate + ATP = L-glutamyl-tRNA(Glu) + AMP + diphosphate. Functionally, catalyzes the attachment of glutamate to tRNA(Glu) in a two-step reaction: glutamate is first activated by ATP to form Glu-AMP and then transferred to the acceptor end of tRNA(Glu). In Staphylococcus aureus (strain bovine RF122 / ET3-1), this protein is Glutamate--tRNA ligase.